The following is a 609-amino-acid chain: Glutamine--fructose-6-phosphate aminotransferase [isomerizing] (609 aa).

The active-site Nucleophile; for GATase activity is Cys-2. Positions Cys-2–Arg-218 constitute a Glutamine amidotransferase type-2 domain. SIS domains are found at residues Ala-286–Leu-426 and Leu-458–Pro-599. Lys-604 serves as the catalytic For Fru-6P isomerization activity.

Homodimer.

The protein localises to the cytoplasm. It catalyses the reaction D-fructose 6-phosphate + L-glutamine = D-glucosamine 6-phosphate + L-glutamate. Catalyzes the first step in hexosamine metabolism, converting fructose-6P into glucosamine-6P using glutamine as a nitrogen source. The chain is Glutamine--fructose-6-phosphate aminotransferase [isomerizing] from Shigella flexneri.